The sequence spans 454 residues: MWLEILLASVLGFVIYWFVSKDKEETLLLGDGWWGPGSRPAAAEDESIRPFKVETSDEEINDLHQRIEKFRLTPPLEDSRFHYGFNSNYLKKIISYWRNTFDWRKQVEVLNKYPHFKTKIEGLDIHFIHVKPPQLPSGRTAKPLLMVHGWPGCFYEFYKIIPLLTDPKNHGLSDEHVFEVICPSIPGYGFSEASSKKGFNSVAAARIFYKLMLRLGFQEFYLQGGDWGSLICTNMAQLVPSHVKGLHLNVALVLRNVYTLTFFLGRRLGRLFGYTERDLELLYPFKKTFYTLMRESGYMHIQSTKPDTVGCALNDSPVGLAAYILEKFSTWTNEEFRDLEDGGLERKFSLDELLTVIMLYWTTGTITSSQRFYKENLGQGVMANKHEAIKVHVPTGFAAFPSEVLHCPEKWVKNKYPKLISYSYMARGGHFAAFEEPELLAQDIRKFMGLLEQQ.

The chain crosses the membrane as a helical span at residues Met-1 to Lys-21. Topologically, residues Asp-22–Gln-454 are cytoplasmic. The active-site Nucleophile is the Asp-226. Arg-294 carries the post-translational modification Dimethylated arginine. Tyr-373 acts as the Proton donor in catalysis. The active-site Proton acceptor is the His-430.

This sequence belongs to the peptidase S33 family.

Its subcellular location is the microsome membrane. It localises to the endoplasmic reticulum membrane. The catalysed reaction is cis-stilbene oxide + H2O = (1R,2R)-hydrobenzoin. The enzyme catalyses 1-(4-methoxyphenyl)-N-methyl-N-[(3-methyloxetan-3-yl)methyl]methanamine + H2O = 2-{[(4-methoxybenzyl)(methyl)amino]methyl}-2-methylpropane-1,3-diol. It carries out the reaction 8,9-epoxy-(5Z,11Z,14Z)-eicosatrienoate + H2O = 8,9-dihydroxy-(5Z,11Z,14Z)-eicosatrienoate. It catalyses the reaction 11,12-epoxy-(5Z,8Z,14Z)-eicosatrienoate + H2O = 11,12-dihydroxy-(5Z,8Z,14Z)-eicosatrienoate. The catalysed reaction is 2-(5Z,8Z,11Z,14Z-eicosatetraenoyl)-glycerol + H2O = glycerol + (5Z,8Z,11Z,14Z)-eicosatetraenoate + H(+). Inhibited by 10-hydroxystearamide and methoxy-arachidonyl fluorophosphate. Its function is as follows. Biotransformation enzyme that catalyzes the hydrolysis of arene and aliphatic epoxides to less reactive and more water soluble dihydrodiols by the trans addition of water. May play a role in the metabolism of endogenous lipids such as epoxide-containing fatty acids. Metabolizes the abundant endocannabinoid 2-arachidonoylglycerol (2-AG) to free arachidonic acid (AA) and glycerol. Binds 20(S)-hydroxycholesterol (20(S)-OHC). The chain is Epoxide hydrolase 1 (EPHX1) from Sus scrofa (Pig).